Here is a 266-residue protein sequence, read N- to C-terminus: Gasdermin bGSDM (266 aa).

Residue Cys-3 is the site of S-palmitoyl cysteine attachment. The next 4 beta stranded transmembrane spans lie at 69–85, 97–115, 163–180, and 189–205; these read ISGQ…GLSI, KLGL…FEFQ, KFTI…ELTI, and GNVK…KICY.

The protein belongs to the bacterial gasdermin family. As to quaternary structure, monomer. In terms of assembly, forms large, homooligomeric ring-shaped pores when inserted in membranes. In terms of processing, palmitoylation helps stabilize the inactive state; may self palmitoylate. Palmitoylation plays a significant role in pore formation.

The protein resides in the cytoplasm. The protein localises to the cell inner membrane. The full-length protein before cleavage is inactive: intramolecular interactions between the N-terminal domain and the C-terminal region as well as the lipid modification, mediate autoinhibition. The pyroptosis-like-inducing activity is carried by the released N-terminal domain (Gasdermin bGSDM, N-terminus). Precursor of a pore-forming protein involved in defense against bacteriophages. Expression of bGSDM and the neighboring protease gene (Ga0182885_104520) is toxic in E.coli. Cleavage of this precursor by its dedicated protease releases the active moiety (gasdermin bGSDM, N-terminus) which inserts into membranes, forming pores and triggering cell death. Its function is as follows. Pore-forming protein that causes membrane permeabilization via a pyroptosis-like activity. Makes ring-like pores when released. The polypeptide is Gasdermin bGSDM (Desulfuromonadales bacterium).